The chain runs to 926 residues: Sperm-associated antigen 1 (926 aa).

TPR repeat units follow at residues 209–242 (ATRE…LPTV), 244–275 (AYNN…EPGN), and 276–309 (VKAL…EPDN). The disordered stretch occupies residues 318-452 (EVERDLKNSE…ENPAGLKSQG (135 aa)). Ser-347 and Ser-354 each carry phosphoserine. Positions 352–368 (GKSGRKHEDGGGDKKPA) are enriched in basic and acidic residues. The segment covering 369–379 (EPAGAARAAQP) has biased composition (low complexity). Ser-423 bears the Phosphoserine mark. A compositionally biased stretch (gly residues) spans 428-441 (AGGGATGHPGGGQG). 6 TPR repeats span residues 445–478 (PAGL…LEPA), 487–520 (SILY…HPFS), 522–554 (KPLL…DCGL), 623–656 (FKAL…NNKE), 657–690 (CAIY…ADGN), and 692–724 (KAFY…DPSI). Basic and acidic residues-rich tracts occupy residues 758-769 (IQEVNEGKEEPG) and 784-799 (KGGK…EKLP). A disordered region spans residues 758-801 (IQEVNEGKEEPGRPAGEVSMGCLASEKGGKSSRSPEDPEKLPIA). Residue 781 to 788 (ASEKGGKS) coordinates GTP. Ser-791 carries the phosphoserine modification.

In terms of tissue distribution, present in most tissues, including lung, with the strongest expression in brain, colon, kidney, and testis. In sperm and testis, detected in particular in pachytene primary spermatocytes. Up-regulated in pancreatic tumor tissues and not in normal pancreatic tissue.

The protein localises to the cytoplasm. It is found in the dynein axonemal particle. May play a role in the cytoplasmic assembly of the ciliary dynein arms. May play a role in fertilization. Binds GTP and has GTPase activity. The chain is Sperm-associated antigen 1 (SPAG1) from Homo sapiens (Human).